The primary structure comprises 355 residues: Phosphoribosylformylglycinamidine cyclo-ligase (355 aa).

This sequence belongs to the AIR synthase family.

Its subcellular location is the cytoplasm. It carries out the reaction 2-formamido-N(1)-(5-O-phospho-beta-D-ribosyl)acetamidine + ATP = 5-amino-1-(5-phospho-beta-D-ribosyl)imidazole + ADP + phosphate + H(+). The protein operates within purine metabolism; IMP biosynthesis via de novo pathway; 5-amino-1-(5-phospho-D-ribosyl)imidazole from N(2)-formyl-N(1)-(5-phospho-D-ribosyl)glycinamide: step 2/2. The chain is Phosphoribosylformylglycinamidine cyclo-ligase from Paraburkholderia phytofirmans (strain DSM 17436 / LMG 22146 / PsJN) (Burkholderia phytofirmans).